Reading from the N-terminus, the 551-residue chain is Calnexin homolog (551 aa).

A signal peptide spans 1-26 (MVDRKEIPLAMGLLAVLLFFVASSSS). Residues 27 to 480 (FHLVRASDEV…EKGEKQPNLT (454 aa)) lie on the Lumenal side of the membrane. Ca(2+)-binding residues include Ser44 and Asp75. An intrachain disulfide couples Cys118 to Cys153. Residues Tyr122 and Lys124 each contribute to the an alpha-D-glucoside site. A glycan (N-linked (GlcNAc...) asparagine) is linked at Asn140. Residues Tyr144 and Asp151 each coordinate an alpha-D-glucoside. The interval 226–330 (ALIPSKTIPD…CGEWKRPTKS (105 aa)) is disordered. Residues 233–364 (IPDPDDKKPE…QEIPNPEYFE (132 aa)) form a p domain (Extended arm) region. Composition is skewed to basic and acidic residues over residues 234–269 (PDPD…PREI) and 276–295 (KPEP…AKPE). 5 consecutive repeat copies span residues 235 to 246 (DPDDKKPEDWDE), 252 to 263 (DPEAVKPEDWDE), 271 to 282 (DEEAEKPEPWLD), 289 to 299 (DPEAKPEDWDD), and 303 to 313 (GEWEAPKIENP). 4 X approximate repeats regions lie at residues 235–299 (DPDD…DWDD) and 303–360 (GEWE…IPNP). Residues 296–305 (DWDDEEDGEW) are compositionally biased toward acidic residues. An intrachain disulfide couples Cys315 to Cys321. Repeat copies occupy residues 322–332 (GEWKRPTKSNP), 336–346 (GKWSAPYIDNP), and 350–360 (GIWKPQEIPNP). Glu379 serves as a coordination point for an alpha-D-glucoside. A Ca(2+)-binding site is contributed by Asp390. Asn478 carries an N-linked (GlcNAc...) asparagine glycan. Residues 481-501 (IGIIVSVVIVFVSIFFRLIFG) traverse the membrane as a helical segment. The Cytoplasmic portion of the chain corresponds to 502 to 551 (GKKPANVEANVEKKKTNTETTSKQDGGEKEDNKEKEETANPPRRRPKRDN). Positions 510–551 (ANVEKKKTNTETTSKQDGGEKEDNKEKEETANPPRRRPKRDN) are disordered. The span at 526 to 539 (DGGEKEDNKEKEET) shows a compositional bias: basic and acidic residues.

This sequence belongs to the calreticulin family. As to expression, in vegetative and flowering tissues.

The protein localises to the endoplasmic reticulum membrane. Its function is as follows. Calcium-binding protein that interacts with newly synthesized monoglucosylated glycoproteins in the endoplasmic reticulum. It may act in assisting protein assembly and/or in the retention within the ER of unassembled protein subunits. It seems to play a major role in the quality control apparatus of the ER by the retention of incorrectly folded proteins. This is Calnexin homolog from Pisum sativum (Garden pea).